The chain runs to 964 residues: Glycine dehydrogenase (decarboxylating) (964 aa).

K710 carries the N6-(pyridoxal phosphate)lysine modification.

The protein belongs to the GcvP family. In terms of assembly, the glycine cleavage system is composed of four proteins: P, T, L and H. Pyridoxal 5'-phosphate is required as a cofactor.

The catalysed reaction is N(6)-[(R)-lipoyl]-L-lysyl-[glycine-cleavage complex H protein] + glycine + H(+) = N(6)-[(R)-S(8)-aminomethyldihydrolipoyl]-L-lysyl-[glycine-cleavage complex H protein] + CO2. Functionally, the glycine cleavage system catalyzes the degradation of glycine. The P protein binds the alpha-amino group of glycine through its pyridoxal phosphate cofactor; CO(2) is released and the remaining methylamine moiety is then transferred to the lipoamide cofactor of the H protein. This chain is Glycine dehydrogenase (decarboxylating), found in Saccharophagus degradans (strain 2-40 / ATCC 43961 / DSM 17024).